The following is a 277-amino-acid chain: Phosphatidylglycerol--prolipoprotein diacylglyceryl transferase (277 aa).

3 consecutive transmembrane segments (helical) span residues 16-36 (FFQI…FYFL), 62-82 (LLFF…VLFY), and 101-121 (GMAF…FAHL). R145 contacts a 1,2-diacyl-sn-glycero-3-phospho-(1'-sn-glycerol). Helical transmembrane passes span 214–234 (PIWG…RFIA) and 243–263 (FLGL…PMIV).

Belongs to the Lgt family.

It localises to the cell inner membrane. It carries out the reaction L-cysteinyl-[prolipoprotein] + a 1,2-diacyl-sn-glycero-3-phospho-(1'-sn-glycerol) = an S-1,2-diacyl-sn-glyceryl-L-cysteinyl-[prolipoprotein] + sn-glycerol 1-phosphate + H(+). The protein operates within protein modification; lipoprotein biosynthesis (diacylglyceryl transfer). Catalyzes the transfer of the diacylglyceryl group from phosphatidylglycerol to the sulfhydryl group of the N-terminal cysteine of a prolipoprotein, the first step in the formation of mature lipoproteins. The protein is Phosphatidylglycerol--prolipoprotein diacylglyceryl transferase of Leptothrix cholodnii (strain ATCC 51168 / LMG 8142 / SP-6) (Leptothrix discophora (strain SP-6)).